The chain runs to 466 residues: Ornithine decarboxylase (466 aa).

At lysine 116 the chain carries N6-(pyridoxal phosphate)lysine. Pyridoxal 5'-phosphate contacts are provided by residues serine 247, glycine 286, and 318 to 321 (EPGR). Substrate is bound at residue 362–363 (FD). Cysteine 411 acts as the Proton donor; shared with dimeric partner in catalysis. Aspartate 412 contacts substrate. A pyridoxal 5'-phosphate-binding site is contributed by tyrosine 441.

This sequence belongs to the Orn/Lys/Arg decarboxylase class-II family. In terms of assembly, homodimer. Only the dimer is catalytically active, as the active sites are constructed of residues from both monomers. Pyridoxal 5'-phosphate serves as cofactor.

It is found in the cytoplasm. The enzyme catalyses L-ornithine + H(+) = putrescine + CO2. It functions in the pathway amine and polyamine biosynthesis; putrescine biosynthesis via L-ornithine pathway; putrescine from L-ornithine: step 1/1. With respect to regulation, inhibited by antizyme (AZ) OAZ1 in response to polyamine levels. AZ inhibits the assembly of the functional homodimer by binding to ODC monomers and targeting them for ubiquitin-independent proteolytic destruction by the 26S proteasome. In terms of biological role, catalyzes the first and rate-limiting step of polyamine biosynthesis that converts ornithine into putrescine, which is the precursor for the polyamines, spermidine and spermine. Polyamines are essential for cell proliferation and are implicated in cellular processes, ranging from DNA replication to apoptosis. The polypeptide is Ornithine decarboxylase (Saccharomyces cerevisiae (strain ATCC 204508 / S288c) (Baker's yeast)).